Reading from the N-terminus, the 398-residue chain is Acetate kinase (398 aa).

Asparagine 8 provides a ligand contact to Mg(2+). Lysine 15 is an ATP binding site. Residue arginine 89 participates in substrate binding. Aspartate 146 (proton donor/acceptor) is an active-site residue. ATP contacts are provided by residues 206 to 210 (HIGNG), 283 to 285 (DMR), and 331 to 335 (GMGEN). Glutamate 383 lines the Mg(2+) pocket.

The protein belongs to the acetokinase family. As to quaternary structure, homodimer. It depends on Mg(2+) as a cofactor. The cofactor is Mn(2+).

The protein resides in the cytoplasm. The enzyme catalyses acetate + ATP = acetyl phosphate + ADP. Its pathway is metabolic intermediate biosynthesis; acetyl-CoA biosynthesis; acetyl-CoA from acetate: step 1/2. Functionally, catalyzes the formation of acetyl phosphate from acetate and ATP. Can also catalyze the reverse reaction. The polypeptide is Acetate kinase (Streptococcus pyogenes serotype M2 (strain MGAS10270)).